A 203-amino-acid polypeptide reads, in one-letter code: Protein shisa-like-1a (203 aa).

Positions 1 to 25 (MIMNGRWSFNTLAIIFILLSTAALS) are cleaved as a signal peptide. Residues 26–97 (AHFRVCEPYS…SDSFAHNNYT (72 aa)) lie on the Extracellular side of the membrane. Residues Asn-53, Asn-63, Asn-72, Asn-83, and Asn-95 are each glycosylated (N-linked (GlcNAc...) asparagine). A helical membrane pass occupies residues 98–118 (ALIGVWIYGFFVMVLLALDFL). The Cytoplasmic portion of the chain corresponds to 119–203 (YYSAMNYELC…LLSFQTSTAW (85 aa)). The tract at residues 157 to 191 (ELNTGPGLSQQQQLHLHHHHHHHHPRHSLRGDTQS) is disordered. Residues 161–170 (GPGLSQQQQL) show a composition bias toward low complexity. The span at 171-184 (HLHHHHHHHHPRHS) shows a compositional bias: basic residues.

Belongs to the shisa family.

It localises to the membrane. The sequence is that of Protein shisa-like-1a (shisal1a) from Danio rerio (Zebrafish).